The following is a 122-amino-acid chain: Large ribosomal subunit protein uL14 (122 aa).

The protein belongs to the universal ribosomal protein uL14 family. In terms of assembly, part of the 50S ribosomal subunit. Forms a cluster with proteins L3 and L19. In the 70S ribosome, L14 and L19 interact and together make contacts with the 16S rRNA in bridges B5 and B8.

Functionally, binds to 23S rRNA. Forms part of two intersubunit bridges in the 70S ribosome. This is Large ribosomal subunit protein uL14 from Sulfurimonas denitrificans (strain ATCC 33889 / DSM 1251) (Thiomicrospira denitrificans (strain ATCC 33889 / DSM 1251)).